The sequence spans 331 residues: MAEADTERRPHIPVLLRPLLAAVAPVEGTWLDGTFGAGGYARGLLEAGADRVIGVDRDPLALKMASGWAGDYGDRLRLVAGTFSQLDSHAGAPLDGVVLDLGVSSMQLDLAERGFSFQKDGPLDMRMSQEGESAADLVNTASEESLADILYHYGEERASRRIARAIVEARAAAPITRTLALAEIVARCLPRPKPGQMHPATRSFQAIRIAVNAEFSELVEGLEAAERALRPGGRLAVVTFHSLEDRIVKRFLQLRSGGEGQGNRYAPETRAYAPRFTLPLRRAISPDEAELAENPRARSARLRVGVRTDAPAGKVDPQALGTPLIPKKGRR.

S-adenosyl-L-methionine contacts are provided by residues 38 to 40 (GGY), Asp-56, Phe-83, Asp-100, and Gln-107. The disordered stretch occupies residues 289–331 (AELAENPRARSARLRVGVRTDAPAGKVDPQALGTPLIPKKGRR).

The protein belongs to the methyltransferase superfamily. RsmH family.

It localises to the cytoplasm. The enzyme catalyses cytidine(1402) in 16S rRNA + S-adenosyl-L-methionine = N(4)-methylcytidine(1402) in 16S rRNA + S-adenosyl-L-homocysteine + H(+). In terms of biological role, specifically methylates the N4 position of cytidine in position 1402 (C1402) of 16S rRNA. The polypeptide is Ribosomal RNA small subunit methyltransferase H (Cereibacter sphaeroides (strain ATCC 17029 / ATH 2.4.9) (Rhodobacter sphaeroides)).